Here is a 255-residue protein sequence, read N- to C-terminus: Antigen LPMC-61 (255 aa).

12 tandem repeats follow at residues 18–48 (WPER…QKQQ), 49–57 (WPEGQRQQL), 58–65 (WPEQQQQQ), 66–78 (WPEQ…QQQQ), 79–90 (WPQQQPQMQQEQ), 91–103 (WPQQ…QQQQ), 104–140 (WPQQ…LQQQ), 141–152 (WSEQQQQQQQQQ), 153–164 (WPEQPEQQQQQQ), 165–172 (WPEQQQQQ), 173–192 (WSDQ…QQQQ), and 193–210 (WPQQ…QQQQ). The disordered stretch occupies residues 18–90 (WPERQQQQQP…QQQPQMQQEQ (73 aa)). Positions 18 to 210 (WPERQQQQQP…QQQQQQQQQQ (193 aa)) are 12 X approximate tandem repeats, Gln-rich. Residues 149 to 210 (QQQQWPEQPE…QQQQQQQQQQ (62 aa)) are compositionally biased toward low complexity. The tract at residues 149–224 (QQQQWPEQPE…DGVGIVVPYL (76 aa)) is disordered.

May be covalently linked by disulfide bonds to other polypeptides to form the 80 kDa antigen.

Its function is as follows. Unknown. The Gln-rich tandem repeats may be important for an unknown aspect of the parasitic life cycle. May be an important immunogen. The sequence is that of Antigen LPMC-61 from Eimeria tenella (Coccidian parasite).